The primary structure comprises 185 residues: Photosystem I assembly protein Ycf4 (185 aa).

The next 2 helical transmembrane spans lie at 22-42 (FFFA…GFSS) and 57-77 (IIFV…LFFS).

This sequence belongs to the Ycf4 family.

Its subcellular location is the plastid. It localises to the chloroplast thylakoid membrane. Seems to be required for the assembly of the photosystem I complex. This Welwitschia mirabilis (Tree tumbo) protein is Photosystem I assembly protein Ycf4.